Here is a 1073-residue protein sequence, read N- to C-terminus: Self-sufficient cytochrome P450 monooxygenase CYP505AG1 (1073 aa).

Residue cysteine 409 coordinates heme. The 144-residue stretch at 501-644 folds into the Flavodoxin-like domain; the sequence is VTILYGSNSG…DLENWEDEHL (144 aa). Residues 507–511 and 588–620 contribute to the FMN site; these read SNSGT and VFAC…HRVA. In terms of domain architecture, FAD-binding FR-type spans 680–909; the sequence is HNAVECIVSE…RPCKKQFHLP (230 aa).

In the N-terminal section; belongs to the cytochrome P450 family. Requires FAD as cofactor. FMN is required as a cofactor. It depends on heme as a cofactor.

The enzyme catalyses 2 oxidized [cytochrome P450] + NADPH = 2 reduced [cytochrome P450] + NADP(+) + H(+). The catalysed reaction is an organic molecule + reduced [NADPH--hemoprotein reductase] + O2 = an alcohol + oxidized [NADPH--hemoprotein reductase] + H2O + H(+). It catalyses the reaction dodecanoate + reduced [NADPH--hemoprotein reductase] + O2 = 10-hydroxydodecanoate + oxidized [NADPH--hemoprotein reductase] + H2O + H(+). It carries out the reaction tetradecanoate + reduced [NADPH--hemoprotein reductase] + O2 = 12-hydroxytetradecanoate + oxidized [NADPH--hemoprotein reductase] + H2O + H(+). Self-sufficient cytochrome P450 monooxygenase that catalyzes the regioselective in-chain hydroxylation of alkanes, fatty alcohols, and fatty acids, giving sub-terminal hydroxylation by acting preferentially on the omega-2 position. Prefers fatty acids as substrates, since it hydroxylates the small amounts of dodecanoic acid formed in the presence of an excess of 1-dodecanol. In Oidiodendron maius (strain Zn), this protein is Self-sufficient cytochrome P450 monooxygenase CYP505AG1.